The sequence spans 361 residues: Mitogen-activated protein kinase 14A (361 aa).

One can recognise a Protein kinase domain in the interval 25–309 (YQNLSPVGSG…AAEALAHPYF (285 aa)). ATP contacts are provided by residues 31 to 39 (VGSGAYGSV) and Lys-54. Catalysis depends on Asp-169, which acts as the Proton acceptor. Thr-181 is modified (phosphothreonine; by MAP2K3). The TXY motif lies at 181–183 (TGY). Position 183 is a phosphotyrosine; by MAP2K3 (Tyr-183).

It belongs to the protein kinase superfamily. CMGC Ser/Thr protein kinase family. MAP kinase subfamily. The cofactor is Mg(2+). Dually phosphorylated on Thr-181 and Tyr-183, which activates the enzyme.

It is found in the cytoplasm. It localises to the nucleus. The enzyme catalyses L-seryl-[protein] + ATP = O-phospho-L-seryl-[protein] + ADP + H(+). The catalysed reaction is L-threonyl-[protein] + ATP = O-phospho-L-threonyl-[protein] + ADP + H(+). With respect to regulation, activated by threonine and tyrosine phosphorylation by the dual specificity kinase, MKK3. Its function is as follows. Serine/threonine kinase which acts as an essential component of the MAP kinase signal transduction pathway. Mapk14a is one of the four p38 MAPKs which play an important role in the cascades of cellular responses evoked by extracellular stimuli such as pro-inflammatory cytokines or physical stress leading to direct activation of transcription factors. Accordingly, p38 MAPKs phosphorylate a broad range of proteins and it has been estimated that they may have approximately 200 to 300 substrates each. Some of the targets are downstream kinases which are activated through phosphorylation and further phosphorylate additional targets. Required for cytokinesis on the future dorsal side of the blastodisc, suggesting a role in symmetrical and synchronous blastomere cleavage. In Danio rerio (Zebrafish), this protein is Mitogen-activated protein kinase 14A (mapk14a).